Reading from the N-terminus, the 104-residue chain is Large ribosomal subunit protein bL21c (104 aa).

The protein belongs to the bacterial ribosomal protein bL21 family. Part of the 50S ribosomal subunit.

It is found in the plastid. The protein resides in the chloroplast. Functionally, this protein binds to 23S rRNA. The sequence is that of Large ribosomal subunit protein bL21c from Guillardia theta (Cryptophyte).